Reading from the N-terminus, the 386-residue chain is Succinate--CoA ligase [ADP-forming] subunit beta (386 aa).

Residues 9–244 (KQILKRFGIS…YDEEIPEEIE (236 aa)) enclose the ATP-grasp domain. Residues Lys-46, 53-55 (GRG), Glu-99, Cys-102, and Glu-107 each bind ATP. Mg(2+) contacts are provided by Asn-199 and Asp-213. Residues Asn-264 and 320-322 (GIM) contribute to the substrate site.

It belongs to the succinate/malate CoA ligase beta subunit family. Heterotetramer of two alpha and two beta subunits. The cofactor is Mg(2+).

The enzyme catalyses succinate + ATP + CoA = succinyl-CoA + ADP + phosphate. The catalysed reaction is GTP + succinate + CoA = succinyl-CoA + GDP + phosphate. Its pathway is carbohydrate metabolism; tricarboxylic acid cycle; succinate from succinyl-CoA (ligase route): step 1/1. Its function is as follows. Succinyl-CoA synthetase functions in the citric acid cycle (TCA), coupling the hydrolysis of succinyl-CoA to the synthesis of either ATP or GTP and thus represents the only step of substrate-level phosphorylation in the TCA. The beta subunit provides nucleotide specificity of the enzyme and binds the substrate succinate, while the binding sites for coenzyme A and phosphate are found in the alpha subunit. In Ehrlichia ruminantium (strain Welgevonden), this protein is Succinate--CoA ligase [ADP-forming] subunit beta.